The primary structure comprises 272 residues: uncharacterized protein (272 aa).

6 consecutive transmembrane segments (helical) span residues 20-37 (VYLS…NLLI), 57-77 (HPLT…HFSL), 97-119 (LNVS…IMLM), 155-177 (SIAT…YVIF), 184-203 (LVSL…VTLG), and 234-256 (PYSI…WLVI).

It localises to the cell membrane. This is an uncharacterized protein from Halalkalibacterium halodurans (strain ATCC BAA-125 / DSM 18197 / FERM 7344 / JCM 9153 / C-125) (Bacillus halodurans).